Consider the following 320-residue polypeptide: Beta-sarcoglycan (320 aa).

Residues 1 to 10 (MAAAAAAAAA) show a composition bias toward low complexity. The interval 1–34 (MAAAAAAAAATEQQSSNGPVKKSMREKAVERRNV) is disordered. Residues 1–67 (MAAAAAAAAA…GLRGRKGNLA (67 aa)) are Cytoplasmic-facing. Basic and acidic residues predominate over residues 23–34 (SMREKAVERRNV). A helical; Signal-anchor for type II membrane protein membrane pass occupies residues 68 to 88 (ICVIVLLFILAVINLLITLVI). At 89 to 320 (WAVIRIGPNG…VADNPCGNTH (232 aa)) the chain is on the extracellular side. N-linked (GlcNAc...) asparagine glycans are attached at residues Asn160, Asn213, and Asn260. 2 disulfide bridges follow: Cys290–Cys316 and Cys292–Cys309.

It belongs to the sarcoglycan beta/delta/gamma/zeta family. Cross-link to form 2 major subcomplexes: one consisting of SGCB, SGCD and SGCG and the other consisting of SGCB and SGCD. The association between SGCB and SGCG is particularly strong while SGCA is loosely associated with the other sarcoglycans. Disulfide bonds are present.

Its subcellular location is the cell membrane. It localises to the sarcolemma. It is found in the cytoplasm. The protein localises to the cytoskeleton. Component of the sarcoglycan complex, a subcomplex of the dystrophin-glycoprotein complex which forms a link between the F-actin cytoskeleton and the extracellular matrix. This chain is Beta-sarcoglycan (SGCB), found in Mesocricetus auratus (Golden hamster).